The sequence spans 207 residues: Casparian strip membrane protein 1 (207 aa).

A2 bears the N-acetylalanine mark. Over 2–44 (AKESTTIDVGEPNTMTKSTSHVVVDEKKKKGFVAAAAGGGYKR) the chain is Cytoplasmic. The helical transmembrane segment at 45-65 (GLAVFDFLLRLAAIGITIGAS) threads the bilayer. The Extracellular segment spans residues 66-95 (SVMFTAEETLPFFTQFLQFQAGYDDFPTFQ). Residues 96-116 (FFVIAIAIVASYLVLSLPFSI) traverse the membrane as a helical segment. Residues 117-128 (VTIVRPLAVAPR) lie on the Cytoplasmic side of the membrane. The helical transmembrane segment at 129–149 (LILLISDTVVLTLTTAAAAAA) threads the bilayer. Over 150 to 181 (ASIVYLAHNGNTNTNWLPICQQFGDFCQTAST) the chain is Extracellular. Residues 182-202 (AVVAASISVAFFVLLIVISAI) traverse the membrane as a helical segment. Topologically, residues 203–207 (ALKRH) are cytoplasmic.

It belongs to the Casparian strip membrane proteins (CASP) family. In terms of assembly, homodimer and heterodimers.

Its subcellular location is the cell membrane. Its function is as follows. Regulates membrane-cell wall junctions and localized cell wall deposition. Required for establishment of the Casparian strip membrane domain (CSD) and the subsequent formation of Casparian strips, a cell wall modification of the root endodermis that determines an apoplastic barrier between the intraorganismal apoplasm and the extraorganismal apoplasm and prevents lateral diffusion. This is Casparian strip membrane protein 1 from Raphanus raphanistrum (Wild radish).